The following is a 641-amino-acid chain: Tetracycline resistance protein TetS (641 aa).

Residues 1–242 (MKIINIGILA…VITSKLFSPT (242 aa)) enclose the tr-type G domain. GTP contacts are provided by residues 10–17 (AHVDAGKT), 74–78 (DTPGH), and 128–131 (NKID).

Belongs to the TRAFAC class translation factor GTPase superfamily. Classic translation factor GTPase family. TetM/TetO subfamily.

Abolishes the inhibitory effect of tetracyclin on protein synthesis by a non-covalent modification of the ribosomes. In Listeria monocytogenes, this protein is Tetracycline resistance protein TetS (tetS).